Consider the following 450-residue polypeptide: Bifunctional protein GlmU (450 aa).

Residues 1-229 (MRRHAIILAA…VEEIMGVNDR (229 aa)) form a pyrophosphorylase region. UDP-N-acetyl-alpha-D-glucosamine is bound by residues 8–11 (LAAG), lysine 22, glutamine 72, and 77–78 (GT). Aspartate 102 lines the Mg(2+) pocket. 3 residues coordinate UDP-N-acetyl-alpha-D-glucosamine: glycine 139, glutamate 154, and asparagine 227. A Mg(2+)-binding site is contributed by asparagine 227. A linker region spans residues 230-250 (VMLSQAEKAMQRRTNHYHMLN). Positions 251–450 (GVTIIDPDST…RQTTKEGYRK (200 aa)) are N-acetyltransferase. 2 residues coordinate UDP-N-acetyl-alpha-D-glucosamine: arginine 332 and lysine 350. The Proton acceptor role is filled by histidine 362. UDP-N-acetyl-alpha-D-glucosamine contacts are provided by tyrosine 365 and asparagine 376. Acetyl-CoA-binding positions include 385–386 (NY), alanine 422, and arginine 439.

It in the N-terminal section; belongs to the N-acetylglucosamine-1-phosphate uridyltransferase family. The protein in the C-terminal section; belongs to the transferase hexapeptide repeat family. In terms of assembly, homotrimer. Requires Mg(2+) as cofactor.

It is found in the cytoplasm. The catalysed reaction is alpha-D-glucosamine 1-phosphate + acetyl-CoA = N-acetyl-alpha-D-glucosamine 1-phosphate + CoA + H(+). The enzyme catalyses N-acetyl-alpha-D-glucosamine 1-phosphate + UTP + H(+) = UDP-N-acetyl-alpha-D-glucosamine + diphosphate. The protein operates within nucleotide-sugar biosynthesis; UDP-N-acetyl-alpha-D-glucosamine biosynthesis; N-acetyl-alpha-D-glucosamine 1-phosphate from alpha-D-glucosamine 6-phosphate (route II): step 2/2. It functions in the pathway nucleotide-sugar biosynthesis; UDP-N-acetyl-alpha-D-glucosamine biosynthesis; UDP-N-acetyl-alpha-D-glucosamine from N-acetyl-alpha-D-glucosamine 1-phosphate: step 1/1. It participates in bacterial outer membrane biogenesis; LPS lipid A biosynthesis. Functionally, catalyzes the last two sequential reactions in the de novo biosynthetic pathway for UDP-N-acetylglucosamine (UDP-GlcNAc). The C-terminal domain catalyzes the transfer of acetyl group from acetyl coenzyme A to glucosamine-1-phosphate (GlcN-1-P) to produce N-acetylglucosamine-1-phosphate (GlcNAc-1-P), which is converted into UDP-GlcNAc by the transfer of uridine 5-monophosphate (from uridine 5-triphosphate), a reaction catalyzed by the N-terminal domain. This chain is Bifunctional protein GlmU, found in Staphylococcus aureus (strain USA300).